Here is a 407-residue protein sequence, read N- to C-terminus: F-box protein SKIP23 (407 aa).

In terms of domain architecture, F-box spans 2–50 (VDWSTLPKDLLDLISKSLESSFDLIQFRSVCSSWRSAAEPKSPLPTHHL).

In terms of assembly, part of a SCF (ASK-cullin-F-box) protein ligase complex. Interacts with SKP1A/ASK1.

It localises to the nucleus. It participates in protein modification; protein ubiquitination. Component of SCF(ASK-cullin-F-box) E3 ubiquitin ligase complexes, which may mediate the ubiquitination and subsequent proteasomal degradation of target proteins. In Arabidopsis thaliana (Mouse-ear cress), this protein is F-box protein SKIP23 (SKIP23).